Here is a 614-residue protein sequence, read N- to C-terminus: Sorting nexin-18 (614 aa).

Positions 1–61 (MALRARALYD…PASYVQVIRA (61 aa)) constitute an SH3 domain. A disordered region spans residues 85–218 (GFEPLPAAPP…SQELGHGEPQ (134 aa)). The segment covering 90 to 101 (PAAPPAAFPPLL) has biased composition (pro residues). The span at 141 to 151 (SDDDWDDEWDD) shows a compositional bias: acidic residues. The 111-residue stretch at 266–376 (FQCTIDDPTK…HFLTCPSSTD (111 aa)) folds into the PX domain. A 1,2-diacyl-sn-glycero-3-phospho-(1D-myo-inositol-4,5-bisphosphate) contacts are provided by R302, K304, and R342. The region spanning 411–614 (LQEVESKIDG…EEALHKYDSV (204 aa)) is the BAR domain.

This sequence belongs to the sorting nexin family. Heterodimer with SNX9. Interacts with ITCH. Interacts with dynamin-2 (DNM2), SYNJ1 and WASL. Interacts with the AP-1 complex. Interacts with FCHSD1 (via the F-BAR domain).

It localises to the endomembrane system. It is found in the endosome membrane. The protein localises to the recycling endosome membrane. The protein resides in the cell membrane. Its subcellular location is the cytoplasmic vesicle membrane. Its function is as follows. Involved in endocytosis and intracellular vesicle trafficking, both during interphase and at the end of mitosis. Required for efficient progress through mitosis and cytokinesis. Required for normal formation of the cleavage furrow at the end of mitosis. Plays a role in endocytosis via clathrin-coated pits, but also clathrin-independent, actin-dependent fluid-phase endocytosis. Plays a role in macropinocytosis. Binds to membranes enriched in phosphatidylinositol 4,5-bisphosphate and promotes membrane tubulation. Stimulates the GTPase activity of DNM2. Promotes DNM2 location at the plasma membrane. Together with DNM2, involved in autophagosome assembly by regulating trafficking from recycling endosomes of phospholipid scramblase ATG9A. The chain is Sorting nexin-18 from Mus musculus (Mouse).